The chain runs to 238 residues: Uridylate kinase (238 aa).

12-15 (KLSG) is an ATP binding site. Glycine 54 lines the UMP pocket. Residues glycine 55 and arginine 59 each contribute to the ATP site. UMP-binding positions include aspartate 74 and 135 to 142 (TGNPYFTT). ATP is bound by residues threonine 162, asparagine 163, tyrosine 168, and aspartate 171.

The protein belongs to the UMP kinase family. In terms of assembly, homohexamer.

It is found in the cytoplasm. The catalysed reaction is UMP + ATP = UDP + ADP. Its pathway is pyrimidine metabolism; CTP biosynthesis via de novo pathway; UDP from UMP (UMPK route): step 1/1. With respect to regulation, inhibited by UTP. Its function is as follows. Catalyzes the reversible phosphorylation of UMP to UDP. The protein is Uridylate kinase of Nitrobacter hamburgensis (strain DSM 10229 / NCIMB 13809 / X14).